The chain runs to 157 residues: ATP synthase subunit b (157 aa).

A helical membrane pass occupies residues 1–21; sequence MHFLDESFWLAISFIIFVYLI.

The protein belongs to the ATPase B chain family. In terms of assembly, F-type ATPases have 2 components, F(1) - the catalytic core - and F(0) - the membrane proton channel. F(1) has five subunits: alpha(3), beta(3), gamma(1), delta(1), epsilon(1). F(0) has three main subunits: a(1), b(2) and c(10-14). The alpha and beta chains form an alternating ring which encloses part of the gamma chain. F(1) is attached to F(0) by a central stalk formed by the gamma and epsilon chains, while a peripheral stalk is formed by the delta and b chains.

The protein localises to the cell inner membrane. Functionally, f(1)F(0) ATP synthase produces ATP from ADP in the presence of a proton or sodium gradient. F-type ATPases consist of two structural domains, F(1) containing the extramembraneous catalytic core and F(0) containing the membrane proton channel, linked together by a central stalk and a peripheral stalk. During catalysis, ATP synthesis in the catalytic domain of F(1) is coupled via a rotary mechanism of the central stalk subunits to proton translocation. Component of the F(0) channel, it forms part of the peripheral stalk, linking F(1) to F(0). The protein is ATP synthase subunit b of Rickettsia bellii (strain RML369-C).